The sequence spans 87 residues: Neurotoxin Cex1 (87 aa).

Residues 1–19 form the signal peptide; it reads MNSLLMITTCLVLFGTVWA. In terms of domain architecture, LCN-type CS-alpha/beta spans 20–85; it reads KEGYLVSKST…TYPIPGKSCG (66 aa). 4 disulfide bridges follow: Cys-31–Cys-84, Cys-35–Cys-60, Cys-44–Cys-65, and Cys-48–Cys-67. Residue Cys-84 is modified to Cysteine amide. Positions 85–87 are excised as a propeptide; that stretch reads GKK.

Belongs to the long (4 C-C) scorpion toxin superfamily. Sodium channel inhibitor family. Beta subfamily. As to expression, expressed by the venom gland.

The protein localises to the secreted. Beta toxins bind voltage-independently at site-4 of sodium channels (Nav) and shift the voltage of activation toward more negative potentials thereby affecting sodium channel activation and promoting spontaneous and repetitive firing. The polypeptide is Neurotoxin Cex1 (Centruroides exilicauda (Bark scorpion)).